A 299-amino-acid polypeptide reads, in one-letter code: Phosphatidylcholine-sterol acyltransferase (299 aa).

N-linked (GlcNAc...) asparagine glycosylation is found at N28 and N184. C225 and C268 are oxidised to a cystine. Residue D257 is the Charge relay system of the active site. An N-linked (GlcNAc...) asparagine glycan is attached at N285. H289 serves as the catalytic Charge relay system. N296 carries an N-linked (GlcNAc...) asparagine glycan.

Belongs to the AB hydrolase superfamily. Lipase family.

The protein resides in the secreted. The catalysed reaction is a sterol + a 1,2-diacyl-sn-glycero-3-phosphocholine = a sterol ester + a 1-acyl-sn-glycero-3-phosphocholine. With respect to regulation, APOA1 is the most potent activator in plasma. Also activated by APOE, APOC1 and APOA4. Its function is as follows. Central enzyme in the extracellular metabolism of plasma lipoproteins. Synthesized mainly in the liver and secreted into plasma where it converts cholesterol and phosphatidylcholines (lecithins) to cholesteryl esters and lysophosphatidylcholines on the surface of high and low density lipoproteins (HDLs and LDLs). The cholesterol ester is then transported back to the liver. Has a preference for plasma 16:0-18:2 or 18:O-18:2 phosphatidylcholines. Also produced in the brain by primary astrocytes, and esterifies free cholesterol on nascent APOE-containing lipoproteins secreted from glia and influences cerebral spinal fluid (CSF) APOE- and APOA1 levels. Together with APOE and the cholesterol transporter ABCA1, plays a key role in the maturation of glial-derived, nascent lipoproteins. Required for remodeling high-density lipoprotein particles into their spherical forms. This chain is Phosphatidylcholine-sterol acyltransferase (LCAT), found in Micromys minutus (European harvest mouse).